A 422-amino-acid chain; its full sequence is Golgi-associated RAB2 interactor protein 2 (422 aa).

A disordered region spans residues proline 353 to serine 404. Residues threonine 360 to proline 374 show a composition bias toward basic and acidic residues.

Belongs to the GARIN family. In terms of assembly, interacts with CALM1. As to expression, expressed in spermatozoa (at protein level).

Its subcellular location is the cell projection. The protein resides in the cilium. The protein localises to the flagellum. Functionally, seems to play a role in sperm motility. The protein is Golgi-associated RAB2 interactor protein 2 of Homo sapiens (Human).